A 413-amino-acid polypeptide reads, in one-letter code: RNA-binding protein 41 (413 aa).

Polar residues predominate over residues 223–235; it reads SVGDSGTAESPSL. Residues 223-247 are disordered; the sequence is SVGDSGTAESPSLLQDKGKQAAQGK. A Phosphoserine modification is found at S232. An RRM domain is found at 309-387; it reads KVLYLKNLSP…KILVIEFGKN (79 aa).

Its function is as follows. May bind RNA. The sequence is that of RNA-binding protein 41 (RBM41) from Homo sapiens (Human).